A 376-amino-acid polypeptide reads, in one-letter code: 23S rRNA (uracil(747)-C(5))-methyltransferase RlmC (376 aa).

Cys-3, Cys-11, Cys-14, and Cys-87 together coordinate [4Fe-4S] cluster. S-adenosyl-L-methionine contacts are provided by Gln-212, Phe-241, Glu-262, and Asn-307. Cys-334 acts as the Nucleophile in catalysis.

It belongs to the class I-like SAM-binding methyltransferase superfamily. RNA M5U methyltransferase family. RlmC subfamily.

It catalyses the reaction uridine(747) in 23S rRNA + S-adenosyl-L-methionine = 5-methyluridine(747) in 23S rRNA + S-adenosyl-L-homocysteine + H(+). Its function is as follows. Catalyzes the formation of 5-methyl-uridine at position 747 (m5U747) in 23S rRNA. The sequence is that of 23S rRNA (uracil(747)-C(5))-methyltransferase RlmC from Salmonella newport (strain SL254).